A 346-amino-acid chain; its full sequence is Protein Rae1 (346 aa).

WD repeat units lie at residues 17 to 61 (ASPP…ATVP), 64 to 105 (MKTM…VMQV), 126 to 148 (LMTGSWDKTLKFWDTRSPNPMMT), and 255 to 289 (VNDIAFHPVHGTLVTVGSDGTFSFWDKDARTKLKS).

Belongs to the WD repeat rae1 family. Interacts with hiw; the interaction with Rae1 may protect hiw from autophagy-mediated degradation. Interacts with Nup98-96. In terms of tissue distribution, head (at protein level).

The protein localises to the cytoplasm. It localises to the perinuclear region. Its subcellular location is the nucleus. The protein resides in the nucleus envelope. It is found in the chromosome. Its function is as follows. Probable component of the nuclear pore complex (NPC) which regulates the nuclear export of specific mRNAs and promotes cell cycle progression during mitosis and male meiosis. Acts with Nup98-96 to promote the nuclear export of specific mRNAs such as Moe, however it does not appear to be required for general nuclear mRNA transport. Essential mitotic and male meiotic cell cycle regulator with roles in many aspects of the cell cycle including chromatin organization and condensation, spindle assembly, chromosome segregation, and maintaining nuclear structure. During male meiosis it is required for completion of meiosis I, as well as accurate cytokinesis of the secondary spermatocytes, and postmeiotic differentiation of spermatids. Acts as a downstream regulatory target of the Hippo/SWH (Sav/Wts/Hpo) signaling pathway to promote mitotic cell cycle progression and proliferation during wing and eye development, and thereby plays a key role in integrating the regulation of proliferation with organ size control. When the Hippo/SWH signaling pathway is inactive, Rae1 acts independently of yki to increase organ size by promoting mitotic S-phase entry and increase cellular proliferation. When the Hippo/SWH signaling pathway is active it inhibits the activity of Rae1 in a Wts-dependent manner to restrict organ growth. However, Rae1 is also able to negatively regulate the levels and activity of yki likely by activating the core kinases of the Hippo/SWH signaling pathway hpo and Wts and increasing the protein levels of hpo, Mer and Wts; it is therefore likely that it functions as part of a negative feedback loop with the Hippo/SWH signaling pathway to regulate pathway homeostasis and prevent organ overgrowth. Promotes mitotic cell cycle progression, at least in part, by increasing the accumulation of mitotic cyclins such as CycB, possibly by directly up-regulating cyclin transcripts or by inhibiting the anaphase promoting complex/cyclosome (APC/C) activator fzy. Also required in presynaptic, postmitotic motor neurons to restrain synaptic terminal growth. Promotes the expression and stability of the an E3 ubiquitin ligase of hiw, and is likely to function in the regulation of synaptic growth by binding to hiw and protecting it from autophagy-mediated degradation. This chain is Protein Rae1, found in Drosophila melanogaster (Fruit fly).